Consider the following 453-residue polypeptide: Chromosomal replication initiator protein DnaA (453 aa).

The tract at residues 1-78 is domain I, interacts with DnaA modulators; it reads MTENEQLFWN…FEIFNAEITA (78 aa). The domain II stretch occupies residues 78–112; that stretch reads ANYVSNDLHLQETSFSNYQQSSNEVNTLPIRKIDS. Residues 113 to 331 are domain III, AAA+ region; that stretch reads NLKEKYTFAN…GALKNISLVA (219 aa). ATP-binding residues include Gly-157, Gly-159, Lys-160, and Thr-161. The domain IV, binds dsDNA stretch occupies residues 332 to 453; the sequence is DFKHAKTITV…EIETIKNKIR (122 aa).

The protein belongs to the DnaA family. As to quaternary structure, oligomerizes as a right-handed, spiral filament on DNA at oriC.

The protein resides in the cytoplasm. Functionally, plays an essential role in the initiation and regulation of chromosomal replication. ATP-DnaA binds to the origin of replication (oriC) to initiate formation of the DNA replication initiation complex once per cell cycle. Binds the DnaA box (a 9 base pair repeat at the origin) and separates the double-stranded (ds)DNA. Forms a right-handed helical filament on oriC DNA; dsDNA binds to the exterior of the filament while single-stranded (ss)DNA is stabiized in the filament's interior. The ATP-DnaA-oriC complex binds and stabilizes one strand of the AT-rich DNA unwinding element (DUE), permitting loading of DNA polymerase. After initiation quickly degrades to an ADP-DnaA complex that is not apt for DNA replication. Binds acidic phospholipids. This chain is Chromosomal replication initiator protein DnaA, found in Streptococcus agalactiae serotype Ia (strain ATCC 27591 / A909 / CDC SS700).